A 94-amino-acid chain; its full sequence is Cell division protein FtsB (94 aa).

Topologically, residues Met1–Trp3 are cytoplasmic. Residues Leu4–Val21 form a helical membrane-spanning segment. At Gly22–Lys94 the chain is on the periplasmic side. A coiled-coil region spans residues Glu31–Phe73.

Belongs to the FtsB family. As to quaternary structure, part of a complex composed of FtsB, FtsL and FtsQ.

It is found in the cell inner membrane. Functionally, essential cell division protein. May link together the upstream cell division proteins, which are predominantly cytoplasmic, with the downstream cell division proteins, which are predominantly periplasmic. The sequence is that of Cell division protein FtsB from Dechloromonas aromatica (strain RCB).